A 243-amino-acid polypeptide reads, in one-letter code: MIEIIISTIFILYILLTKYKYETLKVIRTLMKNYKEIPLQNITLSENNEVTVEDKRIKIVTITIHGNKHMVKYKFNNKLFTALLPCTESEYQFHITTKNGIDVTENVIKFMGPNYDFYGVKIKVNEIGYDSLMFHRPGKEPTILKSDDYLPNNLSDYQWDFSLVGLNQNISPPPVGEETASNTVEENTMENILKETKNLSQNILIQKKTSISGYKTLDVKRKFVKRKFVKRINLNYSFLILLN.

The Bipartite nuclear localization signal signature appears at 207-224; the sequence is KKTSISGYKTLDVKRKFV.

This is an uncharacterized protein from Acheta domesticus (House cricket).